A 746-amino-acid chain; its full sequence is Root phototropism protein 3 (746 aa).

The segment at M1 to G24 is disordered. Gly residues predominate over residues G9 to R19. The 69-residue stretch at S54–A122 folds into the BTB domain. Positions D250–K605 constitute an NPH3 domain. Residues E461–N500 form a disordered region. The span at S466 to S478 shows a compositional bias: low complexity. Position 546 is a phosphotyrosine (Y546). Residues S708–S746 are disordered. The segment covering P735–S746 has biased composition (basic residues).

This sequence belongs to the NPH3 family. As to quaternary structure, interacts with PKS1, PKS2, RPT2, PHOT1 and PHOT2. Subunit of a complex made of CAR6, PHOT1 and RPT3/NPH3. Phosphorylated in the dark. As to expression, expressed in hypocotyls, guard cells and mesophyll cells.

The protein localises to the cell membrane. It participates in protein modification; protein ubiquitination. In terms of biological role, may act as a substrate-specific adapter of an E3 ubiquitin-protein ligase complex (CUL3-RBX1-BTB) which mediates the ubiquitination and subsequent proteasomal degradation of target proteins. Signal transducer of the phototropic response and photo-induced movements. Involved in the phot1 pathway under low blue light (LBL) fluence rate and in the phot2 pathway under higher fluence rate of blue light (HBL). Necessary for root and hypocotyl phototropisms, but not for the regulation of stomata opening. Not involved in chloroplast accumulation and translocation. This is Root phototropism protein 3 (RPT3) from Arabidopsis thaliana (Mouse-ear cress).